The primary structure comprises 917 residues: Nitrate reductase [NADH] 2 (917 aa).

The segment at 1-72 (MAASVDNRQY…SEDENETHNS (72 aa)) is disordered. Residues 37-47 (AHQNQTTNQTV) show a composition bias toward polar residues. Residues 57–67 (DDEDVSSEDEN) show a composition bias toward acidic residues. C191 serves as a coordination point for Mo-molybdopterin. A Cytochrome b5 heme-binding domain is found at 542–617 (AKMYSMSEVK…LEDYRIGELI (76 aa)). Heme-binding residues include H577 and H600. Positions 660-772 (RAKVPVQLVE…KGPLGHVEYL (113 aa)) constitute an FAD-binding FR-type domain. FAD is bound by residues 712–715 (RAYT), 729–733 (VVKIY), F734, F741, 746–748 (LMS), and T799.

Belongs to the nitrate reductase family. In terms of assembly, homodimer. FAD serves as cofactor. The cofactor is heme. It depends on Mo-molybdopterin as a cofactor. In terms of tissue distribution, root, leaf, and shoot.

The enzyme catalyses nitrite + NAD(+) + H2O = nitrate + NADH + H(+). In terms of biological role, nitrate reductase is a key enzyme involved in the first step of nitrate assimilation in plants, fungi and bacteria. The protein is Nitrate reductase [NADH] 2 (NIA2) of Arabidopsis thaliana (Mouse-ear cress).